Consider the following 552-residue polypeptide: Serine palmitoyltransferase 3 (552 aa).

A disordered region spans residues M1–C29. Residues P59 to L79 traverse the membrane as a helical segment. K371 is modified (N6-(pyridoxal phosphate)lysine).

It belongs to the class-II pyridoxal-phosphate-dependent aminotransferase family. As to quaternary structure, component of the serine palmitoyltransferase (SPT) complex, which is composed of SPTLC1, SPTLC2 or SPTLC3 and SPTSSA or SPTSSB. The heterodimer consisting of SPTLC1 and SPTLC2/SPTLC3 forms the catalytic core of the enzyme, while SPTSSA or SPTSSB subunits determine substrate specificity. SPT also interacts with ORMDL proteins, especially ORMDL3, which negatively regulate SPT activity in the presence of ceramides. It depends on pyridoxal 5'-phosphate as a cofactor. In terms of tissue distribution, expressed in most tissues, except peripheral blood cells and bone marrow, with highest levels in heart, kidney, liver, uterus and skin.

The protein localises to the endoplasmic reticulum membrane. The catalysed reaction is L-serine + hexadecanoyl-CoA + H(+) = 3-oxosphinganine + CO2 + CoA. It carries out the reaction dodecanoyl-CoA + L-serine + H(+) = 3-oxotetradecasphinganine + CO2 + CoA. The enzyme catalyses tetradecanoyl-CoA + L-serine + H(+) = 3-oxohexadecasphinganine + CO2 + CoA. It catalyses the reaction octadecanoyl-CoA + L-serine + H(+) = 3-oxoeicosasphinganine + CO2 + CoA. The protein operates within lipid metabolism; sphingolipid metabolism. With respect to regulation, SPT complex catalytic activity is negatively regulated by ORMDL proteins, including ORMDL3, in the presence of ceramides. This mechanism allows to maintain ceramide levels at sufficient concentrations for the production of complex sphingolipids, but which prevents the accumulation of ceramides to levels that trigger apoptosis. Functionally, component of the serine palmitoyltransferase multisubunit enzyme (SPT) that catalyzes the initial and rate-limiting step in sphingolipid biosynthesis by condensing L-serine and activated acyl-CoA (most commonly palmitoyl-CoA) to form long-chain bases. The SPT complex is composed of SPTLC1, SPTLC2 or SPTLC3 and SPTSSA or SPTSSB. Within this complex, the heterodimer consisting of SPTLC1 and SPTLC2/SPTLC3 forms the catalytic core. The composition of the serine palmitoyltransferase (SPT) complex determines the substrate preference. The SPTLC1-SPTLC2-SPTSSA complex shows a strong preference for C16-CoA substrate, while the SPTLC1-SPTLC3-SPTSSA isozyme uses both C14-CoA and C16-CoA as substrates, with a slight preference for C14-CoA. The SPTLC1-SPTLC2-SPTSSB complex shows a strong preference for C18-CoA substrate, while the SPTLC1-SPTLC3-SPTSSB isozyme displays an ability to use a broader range of acyl-CoAs, without apparent preference. This Homo sapiens (Human) protein is Serine palmitoyltransferase 3.